The primary structure comprises 600 residues: Oligopeptide-binding protein OppA (600 aa).

A signal peptide spans 1–22 (MNKLKVTLLASSVVLAATLLSA). Cys23 carries N-palmitoyl cysteine lipidation. The S-diacylglycerol cysteine moiety is linked to residue Cys23.

It belongs to the bacterial solute-binding protein 5 family. As to quaternary structure, the complex is composed of two ATP-binding proteins (OppD and OppF), two transmembrane proteins (OppB and OppC) and a solute-binding protein (OppA).

It localises to the cell membrane. In terms of biological role, part of the ABC transporter complex OppABCDF involved in the uptake of oligopeptides. Essential for uptake of peptides larger than three amino acids and for growth in milk. The protein is Oligopeptide-binding protein OppA of Lactococcus lactis subsp. lactis (Streptococcus lactis).